We begin with the raw amino-acid sequence, 750 residues long: Photosystem I P700 chlorophyll a apoprotein A1 (750 aa).

Helical transmembrane passes span 70–93 (VFSAHFGQLSIIFLWLSGMYFHGA), 156–179 (LYCTAIGALVFAALMLFAGWFHYH), 195–219 (LNHHLAGLLGLGSLSWAGHQVHVSL), 291–309 (IAHHHLAIAILFLIAGHMY), 346–369 (WHAQLSLNLAMLGSLTIVVAHHMY), 385–411 (LSLFTHHMWIGGFLIVGAAAHAAIFMV), 433–455 (AIISHLNWACIFLGFHSFGLYIH), and 531–549 (FLVHHIHAFTIHVTVLILL). Residues cysteine 573 and cysteine 582 each coordinate [4Fe-4S] cluster. 2 helical membrane-spanning segments follow: residues 589–610 (HVFLGLFWMYNAISVVIFHFSW) and 664–686 (LSAYGLFFLGAHFVWAFSLMFLF). A chlorophyll a'-binding site is contributed by histidine 675. Positions 683 and 691 each coordinate chlorophyll a. Residue tryptophan 692 participates in phylloquinone binding. A helical transmembrane segment spans residues 724 to 744 (AVGVTHYLLGGIATTWAFFLA).

Belongs to the PsaA/PsaB family. In terms of assembly, the PsaA/B heterodimer binds the P700 chlorophyll special pair and subsequent electron acceptors. PSI consists of a core antenna complex that captures photons, and an electron transfer chain that converts photonic excitation into a charge separation. The eukaryotic PSI reaction center is composed of at least 11 subunits. P700 is a chlorophyll a/chlorophyll a' dimer, A0 is one or more chlorophyll a, A1 is one or both phylloquinones and FX is a shared 4Fe-4S iron-sulfur center. is required as a cofactor.

The protein localises to the plastid. It localises to the chloroplast thylakoid membrane. The enzyme catalyses reduced [plastocyanin] + hnu + oxidized [2Fe-2S]-[ferredoxin] = oxidized [plastocyanin] + reduced [2Fe-2S]-[ferredoxin]. PsaA and PsaB bind P700, the primary electron donor of photosystem I (PSI), as well as the electron acceptors A0, A1 and FX. PSI is a plastocyanin-ferredoxin oxidoreductase, converting photonic excitation into a charge separation, which transfers an electron from the donor P700 chlorophyll pair to the spectroscopically characterized acceptors A0, A1, FX, FA and FB in turn. Oxidized P700 is reduced on the lumenal side of the thylakoid membrane by plastocyanin. The polypeptide is Photosystem I P700 chlorophyll a apoprotein A1 (Atropa belladonna (Belladonna)).